Consider the following 155-residue polypeptide: uncharacterized protein (155 aa).

This is an uncharacterized protein from Saccharomyces cerevisiae (strain ATCC 204508 / S288c) (Baker's yeast).